Consider the following 228-residue polypeptide: Ureidoacrylate amidohydrolase RutB (228 aa).

Aspartate 23 (proton acceptor) is an active-site residue. The active site involves lysine 132. The active-site Nucleophile is cysteine 165.

This sequence belongs to the isochorismatase family. RutB subfamily.

The enzyme catalyses (Z)-3-ureidoacrylate + H2O + H(+) = (Z)-3-aminoacrylate + NH4(+) + CO2. The catalysed reaction is (Z)-3-ureidoacrylate + H2O = (Z)-3-aminoacrylate + carbamate + H(+). It catalyses the reaction (Z)-2-methylureidoacrylate + H2O + H(+) = (Z)-2-methylaminoacrylate + NH4(+) + CO2. In terms of biological role, hydrolyzes ureidoacrylate to form aminoacrylate and carbamate. The carbamate hydrolyzes spontaneously, thereby releasing one of the nitrogen atoms of the pyrimidine ring as ammonia and one of its carbon atoms as CO2. This is Ureidoacrylate amidohydrolase RutB from Agrobacterium fabrum (strain C58 / ATCC 33970) (Agrobacterium tumefaciens (strain C58)).